We begin with the raw amino-acid sequence, 514 residues long: 2,3-bisphosphoglycerate-independent phosphoglycerate mutase (514 aa).

Positions 14 and 64 each coordinate Mn(2+). S64 acts as the Phosphoserine intermediate in catalysis. Residues H125, 155–156, R187, R193, 263–266, and K336 each bind substrate; these read RD and RADR. D403, H407, D444, H445, and H463 together coordinate Mn(2+).

This sequence belongs to the BPG-independent phosphoglycerate mutase family. In terms of assembly, monomer. The cofactor is Mn(2+).

The enzyme catalyses (2R)-2-phosphoglycerate = (2R)-3-phosphoglycerate. It participates in carbohydrate degradation; glycolysis; pyruvate from D-glyceraldehyde 3-phosphate: step 3/5. Catalyzes the interconversion of 2-phosphoglycerate and 3-phosphoglycerate. In Shewanella sediminis (strain HAW-EB3), this protein is 2,3-bisphosphoglycerate-independent phosphoglycerate mutase.